Here is a 51-residue protein sequence, read N- to C-terminus: DNA-directed RNA polymerases II, IV and V subunit 12 (51 aa).

Zn(2+)-binding residues include cysteine 12, cysteine 15, cysteine 29, and cysteine 32.

This sequence belongs to the archaeal Rpo12/eukaryotic RPC10 RNA polymerase subunit family. In terms of assembly, component of the RNA polymerase II, IV and V complexes. Associates with the mediator complex. Interacts with NRPD1.

The protein localises to the nucleus. In terms of biological role, DNA-dependent RNA polymerase catalyzes the transcription of DNA into RNA using the four ribonucleoside triphosphates as substrates. Component of RNA polymerase II which synthesizes mRNA precursors and many functional non-coding RNAs. Pol II is the central component of the basal RNA polymerase II transcription machinery. It is composed of mobile elements that move relative to each other. Component of RNA polymerases IV and V which mediate short-interfering RNAs (siRNA) accumulation and subsequent RNA-directed DNA methylation-dependent (RdDM) transcriptional gene silencing (TGS) of endogenous repeated sequences, including transposable elements. The polypeptide is DNA-directed RNA polymerases II, IV and V subunit 12 (NRPB12) (Arabidopsis thaliana (Mouse-ear cress)).